The following is a 410-amino-acid chain: MKHPIHVTSEIGELQTVLLKRPGKEVENLTPDYLQQLLFDDIPYLPIIQKEHDYFAQTLRNRGVEVLYLEKLAAEALVDKKLREEFVDRILKEGQADVNVAHQTLKEYLLSFSNEELIQKIMGGVRKNEIETSKKTHLYELMEDHYPFYLDPMPNLYFTRDPAASVGDGLTINKMREPARRRESLFMEYIIKYHPRFAKHNVPIWLDRDYKFPIEGGDELILNEETIAIGVSARTSAKAIERLAKNLFSRQNKIKKVLAIEIPKCRAFMHLDTVFTMVDYDKFTIHPAIQGPKGNMNIYILEKGADEETLKITHRTSLMEALKEVLDLSELVLIPCGGGDVIASAREQWNDGSNTLAIAPGVVVTYDRNYVSNTLLREHGIEVIEVLSSELSRGRGGPRCMSMPIVRKDI.

The active-site Amidino-cysteine intermediate is C400.

Belongs to the arginine deiminase family.

The protein resides in the cytoplasm. The catalysed reaction is L-arginine + H2O = L-citrulline + NH4(+). Its pathway is amino-acid degradation; L-arginine degradation via ADI pathway; carbamoyl phosphate from L-arginine: step 1/2. The chain is Arginine deiminase from Bacillus thuringiensis subsp. konkukian (strain 97-27).